The sequence spans 94 residues: Selenoprotein K (94 aa).

Residues Leu20 to Val42 traverse the membrane as a helical segment. The interval Lys48–Arg94 is disordered. A compositionally biased stretch (polar residues) spans Asp49–Phe58. A non-standard amino acid (selenocysteine) is located at residue Sec92.

It belongs to the selenoprotein K family.

It is found in the endoplasmic reticulum membrane. The protein resides in the cell membrane. Functionally, required for Ca(2+) flux in immune cells and plays a role in T-cell proliferation and in T-cell and neutrophil migration. Involved in endoplasmic reticulum-associated degradation (ERAD) of soluble glycosylated proteins. Required for cell surface expression of CD36 and involved in macrophage uptake of low-density lipoprotein and in foam cell formation. Required for palmitoylation. The protein is Selenoprotein K (selenok) of Danio rerio (Zebrafish).